A 317-amino-acid polypeptide reads, in one-letter code: Transcription factor elt-3 (317 aa).

The segment at M1 to Y34 is disordered. The GATA-type zinc finger occupies C244 to C268. The segment at K290–C317 is disordered. The span at T307–C317 shows a compositional bias: basic residues.

Interacts with skn-1; interaction may enhance transcriptional activation of target genes. As to expression, expressed in head, trunk and tail. Expression decreases with age in the hypodermal cells and the pharyngeal-intestinal valve cells in the head, eventually showing little or no expression in about 14 day old worms. Expressed in hypodermal, but not in intestinal, cells at 1 day of age. Expression in the hypodermal and intestinal cells in the trunk region decreases quickly between day 3 and day 5 of adulthood. Expression in the tail between days 3 and 14 stays approximately uniform.

It is found in the nucleus. In terms of biological role, transcription factor. Required, in concert with signal transducer and transcription factor sta-2, for up-regulation of the vacuolar H(+)-ATPase and acceleration of lysosome maturation at molt. Involved in regulating hypodermal development, perhaps acting downstream of transcription factor elt-1. Modulates environmentally induced changes in collagen gene expression, including rol-6, sqt-1, lon-3, and dpy-13. Involved in regulating expression of various genes, including gst-4, sod-3, ugt-9, and col-144. In response to oxidative stress, required to up-regulate expression of gst-4 mRNA. Regulated by the Insulin/IGF-1-like signaling (IIS) mediated pathway. Plays a role in longevity. May regulate the expression of genes that control sensitivity to osmotic stress, in conjunction with the GATA region-binding transcription factor elt-2. May form a transcriptional circuit with GATA factors egl-18 and elt-6. This Caenorhabditis elegans protein is Transcription factor elt-3.